The sequence spans 153 residues: Protein ripply2.2 (153 aa).

The WRPW motif; required for transcriptional repression and interaction with tle4 signature appears at 58–61; it reads WRPW. The tract at residues 93–128 is ripply homology domain; that stretch reads HPVRLFWPKSKLLDNTYQEAADLLRNFPVQATISLY. The interval 127 to 153 is disordered; that stretch reads LYNDSESDTDNEEDSSEEEQDSGFESE. Acidic residues predominate over residues 131–153; sequence SESDTDNEEDSSEEEQDSGFESE.

Belongs to the ripply family. Interacts with tle4 and tbx6, and mediates interaction between these proteins. In terms of tissue distribution, expressed in the presomitic mesoderm (PSM) in the anterior halves of somitomeres S-I, S-II and S-III.

It is found in the nucleus. Its function is as follows. Required during somitogenesis for the formation of somite boundaries. Represses the expression of genes involved in somite segmentation by acting with the corepressor tle4 to down-regulate the transcriptional activity of tbx6. May act by regulating the activity of tle4. Represses transcription of delta2, thy1 and ripply2.2/bowline itself. The protein is Protein ripply2.2 (ripply2.2) of Xenopus laevis (African clawed frog).